Reading from the N-terminus, the 396-residue chain is Putative transposase y4rJ (396 aa).

The protein belongs to the transposase 20 family.

The sequence is that of Putative transposase y4rJ from Sinorhizobium fredii (strain NBRC 101917 / NGR234).